We begin with the raw amino-acid sequence, 603 residues long: Aspartate--tRNA(Asp/Asn) ligase (603 aa).

The interval 205 to 208 (QLFK) is aspartate. Arginine 227 lines the L-aspartate pocket. ATP contacts are provided by residues 227 to 229 (RDE) and glutamine 236. Histidine 463 lines the L-aspartate pocket. Glutamate 497 contacts ATP. Arginine 504 serves as a coordination point for L-aspartate. Residue 549-552 (GMDR) coordinates ATP.

The protein belongs to the class-II aminoacyl-tRNA synthetase family. Type 1 subfamily. In terms of assembly, homodimer.

The protein resides in the cytoplasm. The catalysed reaction is tRNA(Asx) + L-aspartate + ATP = L-aspartyl-tRNA(Asx) + AMP + diphosphate. Aspartyl-tRNA synthetase with relaxed tRNA specificity since it is able to aspartylate not only its cognate tRNA(Asp) but also tRNA(Asn). Reaction proceeds in two steps: L-aspartate is first activated by ATP to form Asp-AMP and then transferred to the acceptor end of tRNA(Asp/Asn). The protein is Aspartate--tRNA(Asp/Asn) ligase of Anaeromyxobacter dehalogenans (strain 2CP-C).